The primary structure comprises 214 residues: uncharacterized protein (214 aa).

The disordered stretch occupies residues 131 to 214 (TEDILSPPSP…SSSSDSLDAY (84 aa)). Residues 174 to 189 (HRRRRTRRQLRYRQRV) show a composition bias toward basic residues. The segment covering 197–214 (DLGEPLESSSSSDSLDAY) has biased composition (low complexity).

This is an uncharacterized protein from Tupaia.